The following is a 226-amino-acid chain: Thiocyanate methyltransferase 1 (226 aa).

Residues tryptophan 35, tryptophan 39, tryptophan 46, and glycine 73 each coordinate S-adenosyl-L-methionine. At serine 85 the chain carries Phosphoserine. S-adenosyl-L-methionine is bound by residues aspartate 94, 122-123, and tyrosine 138; that span reads DF.

It belongs to the class I-like SAM-binding methyltransferase superfamily. TPMT family. In terms of tissue distribution, ubiquitous.

It catalyses the reaction thiocyanate + S-adenosyl-L-methionine = methyl thiocyanate + S-adenosyl-L-homocysteine. In terms of biological role, S-adenosyl-L-methionine-dependent methyltransferase. Probably involved in glucosinolate metabolism and defense against phytopathogens. Highly reactive to thiocyanate (NCS(-)) derived from myrosinase-mediated hydrolysis of glucosinolates upon tissue damage. Also accepts halid ions as substrates with a lower affinity. The chain is Thiocyanate methyltransferase 1 (TMT1) from Brassica oleracea (Wild cabbage).